A 195-amino-acid polypeptide reads, in one-letter code: MDIKEIALGQIRDSIATKQKCIDSILGDITKAGEMVSKVLQSGNTVYLCGNGGSSCDASHIAAELVVRYKSGNERKALPALSLSGDSAVLTACSNDYGYEEIFARQIEAFGRKGDLLIGLSTSGNSKNVLLALEKAKTRGVKTISLLGGDGGRIKNLSDLDIIVPSKVTARIQESHILIGHILCSIVEYNLFKME.

Residues 36 to 195 (VSKVLQSGNT…IVEYNLFKME (160 aa)) enclose the SIS domain. A substrate-binding site is contributed by 51–53 (NGG). Residues His-60 and Glu-64 each contribute to the Zn(2+) site. Substrate is bound by residues Glu-64, 95–96 (ND), 121–123 (STS), Ser-126, and Gln-173. Residues Gln-173 and His-181 each contribute to the Zn(2+) site.

The protein belongs to the SIS family. GmhA subfamily. Zn(2+) serves as cofactor.

Its subcellular location is the cytoplasm. It carries out the reaction 2 D-sedoheptulose 7-phosphate = D-glycero-alpha-D-manno-heptose 7-phosphate + D-glycero-beta-D-manno-heptose 7-phosphate. Its pathway is carbohydrate biosynthesis; D-glycero-D-manno-heptose 7-phosphate biosynthesis; D-glycero-alpha-D-manno-heptose 7-phosphate and D-glycero-beta-D-manno-heptose 7-phosphate from sedoheptulose 7-phosphate: step 1/1. Functionally, catalyzes the isomerization of sedoheptulose 7-phosphate in D-glycero-D-manno-heptose 7-phosphate. The chain is Phosphoheptose isomerase from Leptospira borgpetersenii serovar Hardjo-bovis (strain JB197).